The primary structure comprises 345 residues: Guanine nucleotide-binding protein alpha-4 subunit (345 aa).

The G-alpha domain occupies 30–345 (KDVKLLLLGP…TILSQALEHF (316 aa)). The G1 motif stretch occupies residues 33–46 (KLLLLGPGESGKST). Residues 38-45 (GPGESGKS), 171-177 (LRCRVRT), 196-200 (DVGGQ), 265-268 (NKKD), and Ala320 each bind GTP. The Mg(2+) site is built by Ser45 and Thr177. The G2 motif stretch occupies residues 169 to 177 (DVLRCRVRT). The interval 192–201 (LKIVDVGGQR) is G3 motif. Residues 261–268 (VLFLNKKD) are G4 motif. The interval 318-323 (TCAVDT) is G5 motif.

The protein belongs to the G-alpha family. In terms of assembly, g proteins are composed of 3 units; alpha, beta and gamma. The alpha chain contains the guanine nucleotide binding site.

In terms of biological role, guanine nucleotide-binding proteins (G proteins) are involved as modulators or transducers in various transmembrane signaling systems. G alpha-4 plays a role in morphogenesis of the multicellular structure. The chain is Guanine nucleotide-binding protein alpha-4 subunit (gpaD) from Dictyostelium discoideum (Social amoeba).